We begin with the raw amino-acid sequence, 512 residues long: Cytoplasmic tRNA 2-thiolation protein 2-A (512 aa).

Belongs to the CTU2/NCS2 family.

It localises to the cytoplasm. It functions in the pathway tRNA modification; 5-methoxycarbonylmethyl-2-thiouridine-tRNA biosynthesis. Plays a central role in 2-thiolation of mcm(5)S(2)U at tRNA wobble positions of tRNA(Lys), tRNA(Glu) and tRNA(Gln). May act by forming a heterodimer with ctu1/atpbd3 that ligates sulfur from thiocarboxylated urm1 onto the uridine of tRNAs at wobble position. This is Cytoplasmic tRNA 2-thiolation protein 2-A (ctu2-a) from Xenopus laevis (African clawed frog).